The chain runs to 1513 residues: DNA polymerase alpha catalytic subunit (1513 aa).

A disordered region spans residues 235-254 (STNQNANASDSKRVSNQTND). 8 residues coordinate Zn(2+): Cys-1344, Cys-1347, Cys-1370, Cys-1373, Cys-1404, Cys-1409, Cys-1422, and Cys-1427. The CysA-type zinc finger occupies 1344-1373 (CPHCSESYHFPGIFQDGKNNTLSGLLCIKC). Positions 1404-1427 (CQEPACGAVSRQLLYNNKCINLAC) match the CysB motif motif.

The protein belongs to the DNA polymerase type-B family.

The protein resides in the nucleus. It catalyses the reaction DNA(n) + a 2'-deoxyribonucleoside 5'-triphosphate = DNA(n+1) + diphosphate. In terms of biological role, polymerase alpha in a complex with DNA primase is a replicative polymerase. This Oxytricha trifallax (Sterkiella histriomuscorum) protein is DNA polymerase alpha catalytic subunit.